The chain runs to 135 residues: MFNRESYLLRKYRLIVFFLSGYEYFLGFLMISSLVPIIALTASKLLRPKTRGPERRTTYESGVEPIGGAWIQFNIRYYMFALVFVIFDVETVFLYPWAVAFHQLGLLAFIEALIFIAILVVALVYAWRKGALEWS.

The next 3 membrane-spanning stretches (helical) occupy residues 15 to 35, 79 to 99, and 104 to 124; these read IVFF…SSLV, MFAL…PWAV, and LGLL…VALV.

It belongs to the complex I subunit 3 family. As to quaternary structure, NDH-1 can be composed of about 15 different subunits; different subcomplexes with different compositions have been identified which probably have different functions.

It is found in the cellular thylakoid membrane. The catalysed reaction is a plastoquinone + NADH + (n+1) H(+)(in) = a plastoquinol + NAD(+) + n H(+)(out). It catalyses the reaction a plastoquinone + NADPH + (n+1) H(+)(in) = a plastoquinol + NADP(+) + n H(+)(out). Its function is as follows. NDH-1 shuttles electrons from an unknown electron donor, via FMN and iron-sulfur (Fe-S) centers, to quinones in the respiratory and/or the photosynthetic chain. The immediate electron acceptor for the enzyme in this species is believed to be plastoquinone. Couples the redox reaction to proton translocation, and thus conserves the redox energy in a proton gradient. Cyanobacterial NDH-1 also plays a role in inorganic carbon-concentration. This chain is NAD(P)H-quinone oxidoreductase subunit 3, found in Trichodesmium erythraeum (strain IMS101).